Consider the following 527-residue polypeptide: MAKIRTDAPVMPPETPPRSSEVGEIDTRAPFQSVRDALSLFRQVSFSKKQPPRLSSSSSSQSQDTTTDVSDKEMQLLLAEQEMDRVKICLDGSVAAKAQALSDLDSAQRKAADLRVKLESIKHSRKCAISTKHTMNQRLEQLQSENQETESTREDYILITAELFMAKYELAELKQQFNLSVEERLAELQRAEEAECASMVNSNKIKDMSHDIAEMRDAAERLNSDAARKKEEEEQIKEESIALRETYVCKKLEAKQRLEDLKRDCDPELKKDIEELMEISTENERLQEEIKLSGELKEAKSAMQEIYDEESSYKSLVGSLTVELDGVQRENRELKGKEKERQEAEEGEWVEASRKVDEIMREAEKTRKEAEEMRMNVDELRREAAAKHMVMGEAVKQLEIVGRAVEKAKTAEKRAVEDMKVLTEKKESLTHDEPDKKIRISLKEYEELRGKHEESERMVQFKAKTVAAQLEEINESRIEGERKLEEKIKEMEELKAAIDGALRKAEIAEEAHSIVDAELRKWKPQDL.

Disordered stretches follow at residues 1–28 (MAKI…IDTR) and 46–70 (FSKK…TDVS). The span at 55–68 (SSSSSSQSQDTTTD) shows a compositional bias: low complexity. 3 coiled-coil regions span residues 95-159 (AAKA…YILI), 202-389 (SNKI…AKHM), and 436-513 (KKIR…EAHS).

This sequence belongs to the WEB family.

In Arabidopsis thaliana (Mouse-ear cress), this protein is Putative WEB family protein At4g17210.